The chain runs to 117 residues: Putative hydrolase fragment YghX (117 aa).

The segment at 91-117 (DGLSSVGGYPGNDDKGRELQQQVDPTN) is disordered.

This Escherichia coli (strain K12) protein is Putative hydrolase fragment YghX (yghX).